We begin with the raw amino-acid sequence, 304 residues long: UDP-3-O-acyl-N-acetylglucosamine deacetylase (304 aa).

Residues His-79, His-238, and Asp-242 each contribute to the Zn(2+) site. The active-site Proton donor is the His-265.

The protein belongs to the LpxC family. Zn(2+) is required as a cofactor.

It catalyses the reaction a UDP-3-O-[(3R)-3-hydroxyacyl]-N-acetyl-alpha-D-glucosamine + H2O = a UDP-3-O-[(3R)-3-hydroxyacyl]-alpha-D-glucosamine + acetate. Its pathway is glycolipid biosynthesis; lipid IV(A) biosynthesis; lipid IV(A) from (3R)-3-hydroxytetradecanoyl-[acyl-carrier-protein] and UDP-N-acetyl-alpha-D-glucosamine: step 2/6. Functionally, catalyzes the hydrolysis of UDP-3-O-myristoyl-N-acetylglucosamine to form UDP-3-O-myristoylglucosamine and acetate, the committed step in lipid A biosynthesis. The protein is UDP-3-O-acyl-N-acetylglucosamine deacetylase of Laribacter hongkongensis (strain HLHK9).